The following is a 66-amino-acid chain: Vesicular acetylcholine transporter (66 aa).

Residues 1 to 15 traverse the membrane as a helical segment; that stretch reads GMGLANLLYAPVLLL. Over 16 to 66 the chain is Cytoplasmic; the sequence is LRNVGLLTRSRSERDVLLDEPPQGLYDAVRLRERPVSGQDGEPRSPPGPFD. Residues 43 to 66 form a disordered region; it reads AVRLRERPVSGQDGEPRSPPGPFD.

The protein belongs to the major facilitator superfamily. Vesicular transporter family. In terms of assembly, interacts with SEC14L1.

The protein localises to the cytoplasmic vesicle. Its subcellular location is the secretory vesicle. The protein resides in the synaptic vesicle membrane. The enzyme catalyses acetylcholine(out) + 2 H(+)(in) = acetylcholine(in) + 2 H(+)(out). It carries out the reaction choline(in) + 2 H(+)(out) = choline(out) + 2 H(+)(in). It catalyses the reaction serotonin(in) + 2 H(+)(out) = serotonin(out) + 2 H(+)(in). Functionally, electrogenic antiporter that exchanges one cholinergic neurotransmitter, acetylcholine or choline, with two intravesicular protons across the membrane of synaptic vesicles. Uses the electrochemical proton gradient established by the V-type proton-pump ATPase to store neurotransmitters inside the vesicles prior to their release via exocytosis. Determines cholinergic vesicular quantal size at presynaptic nerve terminals in developing neuro-muscular junctions with an impact on motor neuron differentiation and innervation pattern. Part of forebrain cholinergic system, regulates hippocampal synapse transmissions that underlie spatial memory formation. Can transport serotonin. This is Vesicular acetylcholine transporter (SLC18A3) from Macaca fuscata fuscata (Japanese macaque).